Here is a 320-residue protein sequence, read N- to C-terminus: Pyrroline-5-carboxylate reductase 2 (320 aa).

Position 2 is an N-acetylserine (S2). NADP(+) contacts are provided by residues 6 to 11 (IGAGQL) and S34. NADPH-binding residues include A8, Q10, L11, S34, E36, N56, V70, K71, and A97. NADP(+) is bound by residues N56, 69–72 (AVKP), and 95–97 (CAA). L-proline is bound at residue E164. Residue N230 participates in NADPH binding. 2 residues coordinate L-proline: A237 and T238. The segment covering 296 to 305 (TVSTLTPSSP) has biased composition (low complexity). The tract at residues 296-320 (TVSTLTPSSPGKLLTRSLALGGKKD) is disordered. A Phosphoserine modification is found at S304.

It belongs to the pyrroline-5-carboxylate reductase family. As to quaternary structure, homodecamer; composed of 5 homodimers. Interacts with LTO1.

Its subcellular location is the cytoplasm. The protein localises to the mitochondrion. It carries out the reaction L-proline + NADP(+) = (S)-1-pyrroline-5-carboxylate + NADPH + 2 H(+). It catalyses the reaction L-proline + NAD(+) = (S)-1-pyrroline-5-carboxylate + NADH + 2 H(+). It functions in the pathway amino-acid biosynthesis; L-proline biosynthesis; L-proline from L-glutamate 5-semialdehyde: step 1/1. Functionally, oxidoreductase that catalyzes the last step in proline biosynthesis, which corresponds to the reduction of pyrroline-5-carboxylate to L-proline using NAD(P)H. At physiologic concentrations, has higher specific activity in the presence of NADH. Involved in cellular response to oxidative stress. In some cell types, such as erythrocytes, its primary function may be the generation of NADP(+). The chain is Pyrroline-5-carboxylate reductase 2 (PYCR2) from Pongo abelii (Sumatran orangutan).